A 232-amino-acid polypeptide reads, in one-letter code: MSLFNTVRNTIVPVHKEGYPFVAAFFVASLVLGWIFKPLFWIGMIFTLWCAYFFRDPERVTPQDDDLVISPADGKVSAIQMVTPPAELDLGSEPMLRISVFMNVFNCHVNRAPMRGRIVSINYRSGSFVNAELDKASEDNERNGLVIETRHGQIGVVQIAGLVARRILCWANTNEPLDAGERFGLIRFGSRLDVFLPAGAAPRVSLGQTAIAGETVIAEFASAKGPVISRHS.

The active-site Schiff-base intermediate with substrate; via pyruvic acid is Ser190. Ser190 is subject to Pyruvic acid (Ser); by autocatalysis.

It belongs to the phosphatidylserine decarboxylase family. PSD-A subfamily. In terms of assembly, heterodimer of a large membrane-associated beta subunit and a small pyruvoyl-containing alpha subunit. Requires pyruvate as cofactor. Post-translationally, is synthesized initially as an inactive proenzyme. Formation of the active enzyme involves a self-maturation process in which the active site pyruvoyl group is generated from an internal serine residue via an autocatalytic post-translational modification. Two non-identical subunits are generated from the proenzyme in this reaction, and the pyruvate is formed at the N-terminus of the alpha chain, which is derived from the carboxyl end of the proenzyme. The post-translation cleavage follows an unusual pathway, termed non-hydrolytic serinolysis, in which the side chain hydroxyl group of the serine supplies its oxygen atom to form the C-terminus of the beta chain, while the remainder of the serine residue undergoes an oxidative deamination to produce ammonia and the pyruvoyl prosthetic group on the alpha chain.

The protein localises to the cell membrane. The enzyme catalyses a 1,2-diacyl-sn-glycero-3-phospho-L-serine + H(+) = a 1,2-diacyl-sn-glycero-3-phosphoethanolamine + CO2. It functions in the pathway phospholipid metabolism; phosphatidylethanolamine biosynthesis; phosphatidylethanolamine from CDP-diacylglycerol: step 2/2. Functionally, catalyzes the formation of phosphatidylethanolamine (PtdEtn) from phosphatidylserine (PtdSer). The polypeptide is Phosphatidylserine decarboxylase proenzyme (Rhizobium etli (strain ATCC 51251 / DSM 11541 / JCM 21823 / NBRC 15573 / CFN 42)).